A 303-amino-acid chain; its full sequence is Pycsar effector protein BcPycTIR (303 aa).

Lys-22–Arg-138 contacts a nucleoside 3',5'-cyclic phosphate. Residues Arg-154 to Tyr-273 are TIR-like.

As to quaternary structure, purified protein forms large 2-dimensional sheets when incubated with cUMP and shorter filaments in the presence of cCMP.

It is found in the cytoplasm. It catalyses the reaction NAD(+) + H2O = ADP-D-ribose + nicotinamide + H(+). Activated by cyclic UMP (cUMP) and to a lesser extent by cCMP. In terms of biological role, pycsar (pyrimidine cyclase system for antiphage resistance) provides immunity against bacteriophage. The pyrimidine cyclase (PycC) synthesizes cyclic nucleotides in response to infection; these serve as specific second messenger signals. The signals activate the adjacent effector, leading to bacterial cell death and abortive phage infection. A clade B Pycsar system. The effector protein of a two-gene Pycsar system. Upon activation by cyclic UMP (cUMP) degrades cellular NAD(+). Expression of this and adjacent uridylate cyclase BcPycC (AC A0A0J5ZXG5) probably confers resistance to bacteriophage. The genes are probably only expressed in response to bacteriophage infection. This protein probably only responds to cUMP (produced by its cognate NTP cyclase). This chain is Pycsar effector protein BcPycTIR, found in Burkholderia cepacia (Pseudomonas cepacia).